Reading from the N-terminus, the 250-residue chain is Functional amyloid subunit FapC (250 aa).

The first 24 residues, 1–24 (MKPTMALKPLVFALAALMAVAAQA), serve as a signal peptide directing secretion. The FapC_R1 repeat unit spans residues 62 to 95 (NNAGANGSLSNSKGNLGANIAAGSGNQQDNAAAI). Positions 96-126 (TSSAGDAATVFAVADIYQESKDNKFTNKGTQ) are linker 1. One copy of the FapC_R2 repeat lies at 127–160 (NNALLNNSANNSSGNVGVNVAAGQGNQQKNNLAI). The linker 2 stretch occupies residues 161–199 (VTADGKNVAAASNTEQVSLDNHFLNEASSKHSYKPQYVV). The stretch at 200-233 (NNAGLLNSANNASGNIGVNVAAGAGNQQSNTLTL) is one FapC_R3 repeat. A Cys-X-X-Cys motif is present at residues 237–240 (CTVC).

This sequence belongs to the FapB/FapC family. The major component of purified amyloid fibrils. Forms fibrils in vitro; in the presence of FapA the fibrils are about 50% wider. Interacts with FapA. Fibrillates in vitro; this is inhibited by FapA. Fibrils are resistant to boiling in 2% (weight/vol) SDS and require &gt;90% (vol/vol) formic acid to dissolve.

It is found in the fimbrium. It localises to the secreted. Functionally, the major functional amyloid subunit in this bacterium. Intrinsically disordered in its monomeric state. Upon overexpression of the endogenous six-gene locus (fapA-fapF) in situ, cells form large clumps during liquid growth, make large amounts of biofilm and produce amyloid fibrils. Expression of the 6 gene operon in E.coli strain BL21(DE3) induces flocculation and biofilm formation with copious extracellular fibrils. This is Functional amyloid subunit FapC from Pseudomonas fluorescens.